Reading from the N-terminus, the 325-residue chain is MIDNYNRNINYLRISVTDRCNLRCVYCMPPEGVKQTPHSEILSLEEFARVVDAASDIGIRKIRITGGEPLVRKNIVNLFEKISTNSAIDDISLTTNGVLFAEMASDLKKAGLNRVNFSLDSLNPDTFRDITRMGKFNDVWRSIQKALELELHPVKLNVVAVRGINDHEFADFARLTKEIPIHVRFIELMPIGECNPWAVGNFIAAEEILHGLQQKFGLLDTQVKVTGSGPAKYYCLPNSKGTIGFITAISEHFCAGCNRLRLTANGQLRPCLYGKQEFDLKTPLREGASRQELAKIITKAIRHKPSQHHMEDGWRDRRVMSQIGG.

The region spanning 4-219 (NYNRNINYLR…HGLQQKFGLL (216 aa)) is the Radical SAM core domain. Arg-13 contacts GTP. [4Fe-4S] cluster is bound by residues Cys-20 and Cys-24. Tyr-26 lines the S-adenosyl-L-methionine pocket. Cys-27 contributes to the [4Fe-4S] cluster binding site. Residue Arg-63 participates in GTP binding. Gly-67 serves as a coordination point for S-adenosyl-L-methionine. Thr-94 is a GTP binding site. Ser-118 is a binding site for S-adenosyl-L-methionine. A GTP-binding site is contributed by Lys-155. Position 189 (Met-189) interacts with S-adenosyl-L-methionine. [4Fe-4S] cluster contacts are provided by Cys-254 and Cys-257. A GTP-binding site is contributed by 259–261 (RLR). Cys-271 contributes to the [4Fe-4S] cluster binding site.

This sequence belongs to the radical SAM superfamily. MoaA family. As to quaternary structure, monomer and homodimer. [4Fe-4S] cluster serves as cofactor.

The catalysed reaction is GTP + AH2 + S-adenosyl-L-methionine = (8S)-3',8-cyclo-7,8-dihydroguanosine 5'-triphosphate + 5'-deoxyadenosine + L-methionine + A + H(+). The protein operates within cofactor biosynthesis; molybdopterin biosynthesis. Functionally, catalyzes the cyclization of GTP to (8S)-3',8-cyclo-7,8-dihydroguanosine 5'-triphosphate. The polypeptide is GTP 3',8-cyclase (Desulforamulus reducens (strain ATCC BAA-1160 / DSM 100696 / MI-1) (Desulfotomaculum reducens)).